A 252-amino-acid chain; its full sequence is 5'-nucleotidase SurE (252 aa).

A divalent metal cation contacts are provided by Asp-8, Asp-9, Ser-39, and Asn-91.

The protein belongs to the SurE nucleotidase family. A divalent metal cation serves as cofactor.

It is found in the cytoplasm. It carries out the reaction a ribonucleoside 5'-phosphate + H2O = a ribonucleoside + phosphate. Nucleotidase that shows phosphatase activity on nucleoside 5'-monophosphates. The sequence is that of 5'-nucleotidase SurE from Legionella pneumophila (strain Paris).